The sequence spans 309 residues: Tagatose-6-phosphate kinase (309 aa).

This sequence belongs to the carbohydrate kinase PfkB family. LacC subfamily.

The catalysed reaction is D-tagatofuranose 6-phosphate + ATP = D-tagatofuranose 1,6-bisphosphate + ADP + H(+). It participates in carbohydrate metabolism; D-tagatose 6-phosphate degradation; D-glyceraldehyde 3-phosphate and glycerone phosphate from D-tagatose 6-phosphate: step 1/2. The protein is Tagatose-6-phosphate kinase of Streptococcus pneumoniae (strain P1031).